The primary structure comprises 491 residues: Ketol-acid reductoisomerase (NADP(+)) (491 aa).

One can recognise a KARI N-terminal Rossmann domain in the interval 15–208 (AQLGKCRFMG…GGHRAGVLES (194 aa)). NADP(+)-binding positions include 45–48 (CGAQ), arginine 68, arginine 76, serine 78, and 108–110 (DKQ). Residue histidine 132 is part of the active site. Glycine 158 serves as a coordination point for NADP(+). KARI C-terminal knotted domains are found at residues 209–344 (SFVA…TAPQ) and 345–484 (YEGK…MTDM). Mg(2+)-binding residues include aspartate 217, glutamate 221, glutamate 389, and glutamate 393. Serine 414 provides a ligand contact to substrate.

The protein belongs to the ketol-acid reductoisomerase family. Mg(2+) serves as cofactor.

It catalyses the reaction (2R)-2,3-dihydroxy-3-methylbutanoate + NADP(+) = (2S)-2-acetolactate + NADPH + H(+). The enzyme catalyses (2R,3R)-2,3-dihydroxy-3-methylpentanoate + NADP(+) = (S)-2-ethyl-2-hydroxy-3-oxobutanoate + NADPH + H(+). Its pathway is amino-acid biosynthesis; L-isoleucine biosynthesis; L-isoleucine from 2-oxobutanoate: step 2/4. It functions in the pathway amino-acid biosynthesis; L-valine biosynthesis; L-valine from pyruvate: step 2/4. Its function is as follows. Involved in the biosynthesis of branched-chain amino acids (BCAA). Catalyzes an alkyl-migration followed by a ketol-acid reduction of (S)-2-acetolactate (S2AL) to yield (R)-2,3-dihydroxy-isovalerate. In the isomerase reaction, S2AL is rearranged via a Mg-dependent methyl migration to produce 3-hydroxy-3-methyl-2-ketobutyrate (HMKB). In the reductase reaction, this 2-ketoacid undergoes a metal-dependent reduction by NADPH to yield (R)-2,3-dihydroxy-isovalerate. The chain is Ketol-acid reductoisomerase (NADP(+)) from Escherichia coli (strain ATCC 8739 / DSM 1576 / NBRC 3972 / NCIMB 8545 / WDCM 00012 / Crooks).